A 325-amino-acid chain; its full sequence is L-lactate dehydrogenase (325 aa).

NAD(+) is bound by residues V19, D40, K45, Y70, and 84–85 (GA). Substrate contacts are provided by Q87 and R93. Residues T106, 123-125 (AAN), and S148 contribute to the NAD(+) site. 125–128 (NPVD) contacts substrate. 153-156 (DSAR) provides a ligand contact to substrate. Residues R158 and H173 each contribute to the beta-D-fructose 1,6-bisphosphate site. H180 functions as the Proton acceptor in the catalytic mechanism. A Phosphotyrosine modification is found at Y225. A substrate-binding site is contributed by T234.

This sequence belongs to the LDH/MDH superfamily. LDH family. Homotetramer.

The protein localises to the cytoplasm. It catalyses the reaction (S)-lactate + NAD(+) = pyruvate + NADH + H(+). It functions in the pathway fermentation; pyruvate fermentation to lactate; (S)-lactate from pyruvate: step 1/1. Its activity is regulated as follows. Allosterically activated by fructose 1,6-bisphosphate (FBP). In terms of biological role, catalyzes the conversion of lactate to pyruvate. The protein is L-lactate dehydrogenase of Latilactobacillus sakei (Lactobacillus sakei).